Consider the following 91-residue polypeptide: DNA-binding protein HU (91 aa).

The protein belongs to the bacterial histone-like protein family.

Histone-like DNA-binding protein which is capable of wrapping DNA to stabilize it, and thus to prevent its denaturation under extreme environmental conditions. Also seems to act as a fortuitous virulence factor in delayed sequelae by binding to heparan sulfate-proteoglycans in the extracellular matrix of target organs and acting as a nidus for in situ immune complex formation. This is DNA-binding protein HU (hup) from Streptococcus downei (Streptococcus sobrinus).